Consider the following 109-residue polypeptide: Short-chain dehydrogenase/reductase homolog YusS (109 aa).

Belongs to the short-chain dehydrogenases/reductases (SDR) family.

The sequence is that of Short-chain dehydrogenase/reductase homolog YusS (yusS) from Bacillus subtilis (strain 168).